Reading from the N-terminus, the 362-residue chain is Leucoanthocyanidin dioxygenase (362 aa).

The interval 1 to 23 is disordered; the sequence is MVTSAMGPSPRVEELARSGLDTI. Residues 214-313 enclose the Fe2OG dioxygenase domain; that stretch reads LIVQMKINFY…RISWAVFCEP (100 aa). Fe cation contacts are provided by histidine 238, aspartate 240, and histidine 294. Arginine 304 is a catalytic residue.

It belongs to the iron/ascorbate-dependent oxidoreductase family. It depends on Fe cation as a cofactor. L-ascorbate is required as a cofactor. As to expression, expressed in red but not in green forma of P.frutescens. In red forma, it is predominantly expressed in stems and leaves, but not in roots.

It catalyses the reaction a (2R,3S,4S)-leucoanthocyanidin + 2-oxoglutarate + O2 = a 4-H-anthocyanidin with a 3-hydroxy group + succinate + CO2 + 2 H2O. Its pathway is pigment biosynthesis; anthocyanin biosynthesis. In terms of biological role, oxidation of leucoanthocyanidins into anthocyanidins. This is Leucoanthocyanidin dioxygenase (ANS) from Perilla frutescens (Beefsteak mint).